Here is a 155-residue protein sequence, read N- to C-terminus: Small ribosomal subunit protein uS7 (155 aa).

The protein belongs to the universal ribosomal protein uS7 family. In terms of assembly, part of the 30S ribosomal subunit. Contacts proteins S9 and S11.

In terms of biological role, one of the primary rRNA binding proteins, it binds directly to 16S rRNA where it nucleates assembly of the head domain of the 30S subunit. Is located at the subunit interface close to the decoding center, probably blocks exit of the E-site tRNA. This chain is Small ribosomal subunit protein uS7, found in Corynebacterium diphtheriae (strain ATCC 700971 / NCTC 13129 / Biotype gravis).